Reading from the N-terminus, the 66-residue chain is Cysteine proteinase inhibitor (66 aa).

The short motif at 18–22 is the Secondary area of contact element; the sequence is QVVAG.

This sequence belongs to the cystatin family. Phytocystatin subfamily. In tubers of untreated plants. After ABA treatment or mechanical wounding is mostly accumulated in leaves, to a lesser extent in stems, but not in roots.

This chain is Cysteine proteinase inhibitor (CYS-PIN), found in Solanum tuberosum (Potato).